The primary structure comprises 957 residues: Glycine dehydrogenase (decarboxylating) (957 aa).

Lys-708 is subject to N6-(pyridoxal phosphate)lysine.

Belongs to the GcvP family. As to quaternary structure, the glycine cleavage system is composed of four proteins: P, T, L and H. Pyridoxal 5'-phosphate is required as a cofactor.

It carries out the reaction N(6)-[(R)-lipoyl]-L-lysyl-[glycine-cleavage complex H protein] + glycine + H(+) = N(6)-[(R)-S(8)-aminomethyldihydrolipoyl]-L-lysyl-[glycine-cleavage complex H protein] + CO2. In terms of biological role, the glycine cleavage system catalyzes the degradation of glycine. The P protein binds the alpha-amino group of glycine through its pyridoxal phosphate cofactor; CO(2) is released and the remaining methylamine moiety is then transferred to the lipoamide cofactor of the H protein. The polypeptide is Glycine dehydrogenase (decarboxylating) (Escherichia coli O1:K1 / APEC).